A 364-amino-acid polypeptide reads, in one-letter code: tRNA-specific 2-thiouridylase MnmA 1 (364 aa).

ATP contacts are provided by residues Gly10–Ser17 and Met36. Cys106 acts as the Nucleophile in catalysis. Cys106 and Cys204 are oxidised to a cystine. Gly130 is an ATP binding site. The interval Lys154–Gln156 is interaction with tRNA. The Cysteine persulfide intermediate role is filled by Cys204. An interaction with tRNA region spans residues Arg310 to Tyr311.

The protein belongs to the MnmA/TRMU family.

The protein localises to the cytoplasm. It catalyses the reaction S-sulfanyl-L-cysteinyl-[protein] + uridine(34) in tRNA + AH2 + ATP = 2-thiouridine(34) in tRNA + L-cysteinyl-[protein] + A + AMP + diphosphate + H(+). In terms of biological role, catalyzes the 2-thiolation of uridine at the wobble position (U34) of tRNA, leading to the formation of s(2)U34. The protein is tRNA-specific 2-thiouridylase MnmA 1 of Thermoanaerobacter sp. (strain X514).